A 156-amino-acid polypeptide reads, in one-letter code: ATP synthase subunit b (156 aa).

The helical transmembrane segment at L7–L29 threads the bilayer.

Belongs to the ATPase B chain family. In terms of assembly, F-type ATPases have 2 components, F(1) - the catalytic core - and F(0) - the membrane proton channel. F(1) has five subunits: alpha(3), beta(3), gamma(1), delta(1), epsilon(1). F(0) has three main subunits: a(1), b(2) and c(10-14). The alpha and beta chains form an alternating ring which encloses part of the gamma chain. F(1) is attached to F(0) by a central stalk formed by the gamma and epsilon chains, while a peripheral stalk is formed by the delta and b chains.

It localises to the cell inner membrane. Functionally, f(1)F(0) ATP synthase produces ATP from ADP in the presence of a proton or sodium gradient. F-type ATPases consist of two structural domains, F(1) containing the extramembraneous catalytic core and F(0) containing the membrane proton channel, linked together by a central stalk and a peripheral stalk. During catalysis, ATP synthesis in the catalytic domain of F(1) is coupled via a rotary mechanism of the central stalk subunits to proton translocation. Its function is as follows. Component of the F(0) channel, it forms part of the peripheral stalk, linking F(1) to F(0). The polypeptide is ATP synthase subunit b (Shewanella sp. (strain W3-18-1)).